Here is a 396-residue protein sequence, read N- to C-terminus: MSESVHTNTSLWSKGMKAVIVAQFLSAFGDNALLFATLALLKAQFYPEWSQPILQMVFVGAYILLAPFVGQVADSFAKGRVMMFANGLKLLGAASICFGINPFLGYTLVGVGAAAYSPAKYGILGELTTGSKLVKANGLMEASAIAAILLGSVAGGVLADWHVLVALAACALAYGGAVVANIYIPKLAARPGQSWNLINMTRSFLNACTSLWCNGETRFSLVGTSLFWGAGVTLRFLLVLWVPVALGITDNATPTYLNAMVAIGIVVGAGAAAKLVTLETVSRCMPAGILIGVVVPIFSLQHELLPAYALLMLIGVLGGFFVVPLNALLQERGKKSVGAGNAIAVQNLGENSAMLLMLGIYSLAVMVGIPVVPIGIGFGALFALAITALWIWQRRH.

Topologically, residues 1 to 17 (MSESVHTNTSLWSKGMK) are periplasmic. A helical membrane pass occupies residues 18–38 (AVIVAQFLSAFGDNALLFATL). Topologically, residues 39–52 (ALLKAQFYPEWSQP) are cytoplasmic. The helical transmembrane segment at 53 to 73 (ILQMVFVGAYILLAPFVGQVA) threads the bilayer. Topologically, residues 74 to 90 (DSFAKGRVMMFANGLKL) are periplasmic. Residues 91–111 (LGAASICFGINPFLGYTLVGV) traverse the membrane as a helical segment. The Cytoplasmic portion of the chain corresponds to 112 to 144 (GAAAYSPAKYGILGELTTGSKLVKANGLMEASA). Residues 145–165 (IAAILLGSVAGGVLADWHVLV) form a helical membrane-spanning segment. Residue Ala166 is a topological domain, periplasmic. Residues 167-187 (LAACALAYGGAVVANIYIPKL) traverse the membrane as a helical segment. The Cytoplasmic portion of the chain corresponds to 188–225 (AARPGQSWNLINMTRSFLNACTSLWCNGETRFSLVGTS). Residues 226–246 (LFWGAGVTLRFLLVLWVPVAL) traverse the membrane as a helical segment. Residues 247–255 (GITDNATPT) are Periplasmic-facing. The chain crosses the membrane as a helical span at residues 256 to 276 (YLNAMVAIGIVVGAGAAAKLV). At 277–279 (TLE) the chain is on the cytoplasmic side. Residues 280–300 (TVSRCMPAGILIGVVVPIFSL) form a helical membrane-spanning segment. Over 301-303 (QHE) the chain is Periplasmic. A helical transmembrane segment spans residues 304–324 (LLPAYALLMLIGVLGGFFVVP). Residues 325 to 342 (LNALLQERGKKSVGAGNA) are Cytoplasmic-facing. The chain crosses the membrane as a helical span at residues 343-363 (IAVQNLGENSAMLLMLGIYSL). Over 364-365 (AV) the chain is Periplasmic. The chain crosses the membrane as a helical span at residues 366–386 (MVGIPVVPIGIGFGALFALAI). Over 387–396 (TALWIWQRRH) the chain is Cytoplasmic.

Belongs to the major facilitator superfamily. LplT (TC 2.A.1.42) family.

It is found in the cell inner membrane. Its function is as follows. Catalyzes the facilitated diffusion of 2-acyl-glycero-3-phosphoethanolamine (2-acyl-GPE) into the cell. The chain is Lysophospholipid transporter LplT from Shigella flexneri.